The chain runs to 119 residues: Developmental pluripotency-associated protein 5B/5C (119 aa).

A KH; atypical domain is found at 24-86 (PEVFQVQSLV…SIKVRAKWLL (63 aa)).

It belongs to the KHDC1 family.

The protein localises to the cytoplasm. Its function is as follows. Involved in the maintenance of embryonic stem (ES) cell pluripotency. Dispensable for self-renewal of pluripotent ES cells and establishment of germ cells. Associates with specific target mRNAs. The polypeptide is Developmental pluripotency-associated protein 5B/5C (Mus musculus (Mouse)).